Here is a 318-residue protein sequence, read N- to C-terminus: Biotin synthase (318 aa).

Residues Leu-44–Arg-273 form the Radical SAM core domain. Cys-62, Cys-66, and Cys-69 together coordinate [4Fe-4S] cluster. 4 residues coordinate [2Fe-2S] cluster: Ser-106, Cys-138, Cys-198, and Arg-268.

It belongs to the radical SAM superfamily. Biotin synthase family. Homodimer. Requires [4Fe-4S] cluster as cofactor. [2Fe-2S] cluster is required as a cofactor.

The catalysed reaction is (4R,5S)-dethiobiotin + (sulfur carrier)-SH + 2 reduced [2Fe-2S]-[ferredoxin] + 2 S-adenosyl-L-methionine = (sulfur carrier)-H + biotin + 2 5'-deoxyadenosine + 2 L-methionine + 2 oxidized [2Fe-2S]-[ferredoxin]. It functions in the pathway cofactor biosynthesis; biotin biosynthesis; biotin from 7,8-diaminononanoate: step 2/2. In terms of biological role, catalyzes the conversion of dethiobiotin (DTB) to biotin by the insertion of a sulfur atom into dethiobiotin via a radical-based mechanism. This is Biotin synthase from Clostridium botulinum (strain Langeland / NCTC 10281 / Type F).